Reading from the N-terminus, the 299-residue chain is Methionyl-tRNA formyltransferase (299 aa).

Ser109–Pro112 provides a ligand contact to (6S)-5,6,7,8-tetrahydrofolate.

Belongs to the Fmt family.

The catalysed reaction is L-methionyl-tRNA(fMet) + (6R)-10-formyltetrahydrofolate = N-formyl-L-methionyl-tRNA(fMet) + (6S)-5,6,7,8-tetrahydrofolate + H(+). Attaches a formyl group to the free amino group of methionyl-tRNA(fMet). The formyl group appears to play a dual role in the initiator identity of N-formylmethionyl-tRNA by promoting its recognition by IF2 and preventing the misappropriation of this tRNA by the elongation apparatus. This chain is Methionyl-tRNA formyltransferase, found in Dinoroseobacter shibae (strain DSM 16493 / NCIMB 14021 / DFL 12).